Here is a 498-residue protein sequence, read N- to C-terminus: Zinc finger protein 682 (498 aa).

The KRAB domain maps to 4 to 75 (LTFRDVTIEF…KRHETIAKPP (72 aa)). 10 consecutive C2H2-type zinc fingers follow at residues 173–195 (FKCM…KIIH), 201–223 (CICE…KRIH), 229–251 (YKCE…KRIH), 257–279 (YKCE…KKIH), 285–307 (YTCE…KTIH), 313–335 (YKCK…ERTH), 341–363 (YKCE…KVIH), 369–391 (YKCE…KRIH), 397–419 (YKCE…KRIH), and 425–447 (YNCE…KKIH). The segment at 453-475 (YKCEECGKAFKRCSHLNEHKRVQ) adopts a C2H2-type 11; degenerate zinc-finger fold.

The protein belongs to the krueppel C2H2-type zinc-finger protein family.

The protein localises to the nucleus. Its function is as follows. May be involved in transcriptional regulation. The chain is Zinc finger protein 682 (ZNF682) from Homo sapiens (Human).